The chain runs to 622 residues: Polypeptide N-acetylgalactosaminyltransferase 6 (622 aa).

Over 1–8 (MRLLRRRH) the chain is Cytoplasmic. Residues 9-28 (MSLRLAMLGSVFMLFLFIRQ) form a helical; Signal-anchor for type II membrane protein membrane-spanning segment. At 29 to 622 (KDVSNQEQAM…RDPYQLWLFV (594 aa)) the chain is on the lumenal side. Asn86 is a glycosylation site (N-linked (GlcNAc...) asparagine). The segment at 176-285 (LPTTSVIIVF…HGWLEPLLAR (110 aa)) is catalytic subdomain A. Asp269, His271, and His407 together coordinate Mn(2+). The segment at 348–410 (PIKSPTFAGG…PCSVVGHVFR (63 aa)) is catalytic subdomain B. The N-linked (GlcNAc...) asparagine glycan is linked to Asn476. Residues 506-622 (TNQCLDVGEN…RDPYQLWLFV (117 aa)) enclose the Ricin B-type lectin domain. Cys509 and Cys527 form a disulfide bridge. UDP-N-acetyl-alpha-D-galactosamine-binding residues include Asp511, Glu514, His528, and Asn533. Cystine bridges form between Cys553–Cys566 and Cys597–Cys610.

Belongs to the glycosyltransferase 2 family. GalNAc-T subfamily. Mn(2+) is required as a cofactor.

The protein resides in the golgi apparatus membrane. The enzyme catalyses L-seryl-[protein] + UDP-N-acetyl-alpha-D-galactosamine = a 3-O-[N-acetyl-alpha-D-galactosaminyl]-L-seryl-[protein] + UDP + H(+). It carries out the reaction L-threonyl-[protein] + UDP-N-acetyl-alpha-D-galactosamine = a 3-O-[N-acetyl-alpha-D-galactosaminyl]-L-threonyl-[protein] + UDP + H(+). Its pathway is protein modification; protein glycosylation. In terms of biological role, catalyzes the initial reaction in O-linked oligosaccharide biosynthesis, the transfer of an N-acetyl-D-galactosamine residue to a serine or threonine residue on the protein receptor. May participate in synthesis of oncofetal fibronectin. Has activity toward Muc1a, Muc2, EA2 and fibronectin peptides. The protein is Polypeptide N-acetylgalactosaminyltransferase 6 (Galnt6) of Mus musculus (Mouse).